A 381-amino-acid polypeptide reads, in one-letter code: cAMP-dependent protein kinase type I-beta regulatory subunit (381 aa).

A dimerization and phosphorylation region spans residues 1 to 136; that stretch reads MASPSCFHSE…ALAKAISKNV (136 aa). A Phosphoserine modification is found at Ser-3. Tyr-21 is modified (3'-nitrotyrosine). Positions 66–88 are disordered; sequence LARQKSNSQCDSHDEEISPTPPN. Phosphoserine is present on residues Ser-77 and Ser-83. Thr-85 is subject to Phosphothreonine. The short motif at 96-100 is the Pseudophosphorylation motif element; sequence RRGGV. Arg-97 is modified (omega-N-methylarginine). 3',5'-cyclic AMP-binding positions include 137 to 254, Glu-202, Arg-211, 255 to 381, Glu-326, and Arg-335; these read LFSH…SKVS and ILES…SLTV.

It belongs to the cAMP-dependent kinase regulatory chain family. As to quaternary structure, the inactive holoenzyme is composed of two regulatory chains and two catalytic chains. Activation by cAMP releases the two active catalytic monomers and the regulatory dimer. Interacts with PRKX; regulates this cAMP-dependent protein kinase. Interacts with smAKAP; this interaction may target PRKAR1B to the plasma membrane. The pseudophosphorylation site binds to the substrate-binding region of the catalytic chain, resulting in the inhibition of its activity. In terms of tissue distribution, four types of regulatory chains are found: I-alpha, I-beta, II-alpha, and II-beta. Their expression varies among tissues and is in some cases constitutive and in others inducible.

It is found in the cell membrane. Functionally, regulatory subunit of the cAMP-dependent protein kinases involved in cAMP signaling in cells. In Mus musculus (Mouse), this protein is cAMP-dependent protein kinase type I-beta regulatory subunit (Prkar1b).